The chain runs to 380 residues: Cytochrome b (380 aa).

4 helical membrane passes run 33 to 53 (FGSL…FLAM), 77 to 98 (WLIR…YLHI), 113 to 133 (WTIG…GYVL), and 178 to 198 (FFAF…IHLL). 2 residues coordinate heme b: histidine 83 and histidine 97. Heme b-binding residues include histidine 182 and histidine 196. Position 201 (histidine 201) interacts with a ubiquinone. 4 consecutive transmembrane segments (helical) span residues 226 to 246 (YKDL…ALFS), 288 to 308 (LGGV…PFLH), 320 to 340 (VTQF…WIGG), and 347 to 367 (FVII…VLIP).

Belongs to the cytochrome b family. As to quaternary structure, the cytochrome bc1 complex contains 3 respiratory subunits (MT-CYB, CYC1 and UQCRFS1), 2 core proteins (UQCRC1 and UQCRC2) and probably 6 low-molecular weight proteins. It depends on heme b as a cofactor.

The protein resides in the mitochondrion inner membrane. Component of the ubiquinol-cytochrome c reductase complex (complex III or cytochrome b-c1 complex) that is part of the mitochondrial respiratory chain. The b-c1 complex mediates electron transfer from ubiquinol to cytochrome c. Contributes to the generation of a proton gradient across the mitochondrial membrane that is then used for ATP synthesis. This is Cytochrome b (mt-cyb) from Kareius bicoloratus (Stone flounder).